Consider the following 369-residue polypeptide: GTPase Obg (369 aa).

Residues 1 to 159 (MKFVDEVTID…KNLKLELRVL (159 aa)) form the Obg domain. In terms of domain architecture, OBG-type G spans 160–334 (ADVGLLGMPN…LIHAIYSHVA (175 aa)). Residues 166 to 173 (GMPNAGKS), 191 to 195 (FTTLH), 213 to 216 (DIPG), 284 to 287 (NKLD), and 315 to 317 (SAL) each bind GTP. Mg(2+) is bound by residues Ser173 and Thr193. The segment at 339-369 (QPEEVPDPRFTTNEDLSEAAPAPDRDDPRFR) is disordered.

This sequence belongs to the TRAFAC class OBG-HflX-like GTPase superfamily. OBG GTPase family. Monomer. The cofactor is Mg(2+).

It localises to the cytoplasm. An essential GTPase which binds GTP, GDP and possibly (p)ppGpp with moderate affinity, with high nucleotide exchange rates and a fairly low GTP hydrolysis rate. Plays a role in control of the cell cycle, stress response, ribosome biogenesis and in those bacteria that undergo differentiation, in morphogenesis control. The protein is GTPase Obg of Leptothrix cholodnii (strain ATCC 51168 / LMG 8142 / SP-6) (Leptothrix discophora (strain SP-6)).